Reading from the N-terminus, the 577-residue chain is Urease subunit alpha (577 aa).

The Urease domain maps to 136–577; the sequence is GTVDCHVHLI…LPMTQRYFLF (442 aa). Ni(2+) contacts are provided by H141, H143, and K224. At K224 the chain carries N6-carboxylysine. Substrate is bound at residue H226. Residues H253 and H279 each contribute to the Ni(2+) site. H327 serves as the catalytic Proton donor. D367 lines the Ni(2+) pocket.

It belongs to the metallo-dependent hydrolases superfamily. Urease alpha subunit family. In terms of assembly, heterotrimer of UreA (gamma), UreB (beta) and UreC (alpha) subunits. Three heterotrimers associate to form the active enzyme. It depends on Ni cation as a cofactor. In terms of processing, carboxylation allows a single lysine to coordinate two nickel ions.

It is found in the cytoplasm. The catalysed reaction is urea + 2 H2O + H(+) = hydrogencarbonate + 2 NH4(+). The protein operates within nitrogen metabolism; urea degradation; CO(2) and NH(3) from urea (urease route): step 1/1. This chain is Urease subunit alpha, found in Mycobacterium bovis (strain ATCC BAA-935 / AF2122/97).